The following is a 139-amino-acid chain: Plastocyanin (139 aa).

Residues 1 to 34 (MKLIAASLRRLSLAVLTVLLVVSSFAVFTPSASA) form the signal peptide. Positions 35–139 (ETYTVKLGSD…GMVGKITVAG (105 aa)) constitute a Plastocyanin-like domain. His73, Cys123, His126, and Met131 together coordinate Cu cation.

The protein belongs to the plastocyanin family. Requires Cu(2+) as cofactor.

The protein localises to the cellular thylakoid membrane. Its function is as follows. Participates in electron transfer between P700 and the cytochrome b6-f complex in photosystem I. This chain is Plastocyanin (petE), found in Nostoc sp. (strain PCC 7120 / SAG 25.82 / UTEX 2576).